Consider the following 454-residue polypeptide: Protein pid-2 (454 aa).

The segment at 31 to 61 (VQNNQKEHPPVQEIKTVSSKSKEHRVSSSRK) is disordered. Positions 50–61 (KSKEHRVSSSRK) are enriched in basic and acidic residues.

In terms of assembly, may interact with pid-4, pid-5, app-1 and prmt-5. In terms of tissue distribution, expressed throughout the mitotic and meiotic regions of the germline and in oocytes.

Its subcellular location is the cytoplasm. It localises to the perinuclear region. The protein resides in the cytoplasmic granule. Functionally, involved in gene silencing mediated by a class of 21 nucleotide PIWI-interacting RNAs (piRNAs) that possess a uracil residue at the 5'-end (also called 21U-RNAs) and that guide the Piwi protein prg-1 to its DNA targets for silencing. Not required for the biogenesis of 21U-RNAs. May also be involved in gene silencing mediated by 22G-siRNAs (a class of 22 nucleotide endogenous small interfering RNAs (siRNAs) that possess a triphosphorylated guanine residue at the 5'-end) and 26G-siRNAs (a class of 26 nucleotide siRNAs that possess a guanine residue at the 5'-end). Required for the biogenesis of secondary and tertiary 22G-siRNAs from many loci. Specifically, promotes the production of 22G-siRNAs from the 5' end of target mRNAs. May play a role in the production of 26G-siRNAs. Plays a role in small RNA-directed transgenerational epigenetic inheritance (also called RNAe) over several generations and germline immortality. Together with the argonaut protein hrde-1, promotes the silencing of the DNA transposable element Tc1. Required for the formation of liquid-like condensates in the cytoplasm called Z granules, playing a role in maintaining their assembly, viscosity and morphology in adult germ cells, and localization in early embryos. This is Protein pid-2 from Caenorhabditis elegans.